The following is a 136-amino-acid chain: ATP synthase epsilon chain (136 aa).

The tract at residues 104-136 is disordered; the sequence is AGMEGQPASPEKVKAQQQLNEARARMQASKSAD.

It belongs to the ATPase epsilon chain family. As to quaternary structure, F-type ATPases have 2 components, CF(1) - the catalytic core - and CF(0) - the membrane proton channel. CF(1) has five subunits: alpha(3), beta(3), gamma(1), delta(1), epsilon(1). CF(0) has three main subunits: a, b and c.

The protein localises to the cellular thylakoid membrane. Produces ATP from ADP in the presence of a proton gradient across the membrane. This Synechococcus sp. (strain CC9902) protein is ATP synthase epsilon chain.